The primary structure comprises 368 residues: SH3 domain-containing protein 2 (368 aa).

Coiled-coil stretches lie at residues 1–21 (MDAIRKQASRLREQVARQQQA) and 146–210 (LEDA…LGKE). Positions 1–264 (MDAIRKQASR…MVSERQRIEA (264 aa)) constitute a BAR domain. The interval 258–281 (ERQRIEAPSTPSSADSMPPPPSYE) is disordered. The 60-residue stretch at 299–358 (MGYFLGEVLFPYHGVTDVELSLSTGEYVVVRKVTGSGWAEGECKGKAGWFPYGYIERRER) folds into the SH3 domain.

Homodimer. Interacts with FREE1. Interacts (via SH3 domain) with ATG8E and ATG8F. Component of a phosphoinositide 3-kinase (PI3K) complex containing ATG6, SH3P2 and FREE1. Binds to SH3P3 and DRP1A. Forms a complex made of SH3P2 and DRP1A and triggers its accumulation at the cell plate. Highly expressed in seedlings. Detected in flowers, leaves and stems.

The protein localises to the cytoplasm. It localises to the cytoplasmic vesicle. It is found in the clathrin-coated vesicle. The protein resides in the cell membrane. Its subcellular location is the late endosome. The protein localises to the autophagosome membrane. In terms of biological role, regulator for autophaosome formation and/or maturation. Binds phosphatidylinositol-phosphate; highest affinity for vesicles containing PtdIns(3,4,5)P(3), followed by those containing PtdIns(4,5)P(2) and PtdIns(3,4)P(2), with minimal binding to phosphatidylinositol monophosphates, including PtdIns(3)P. Together with DRP1A, converts the fused vesicles to tubular structures at the cell plate during cytokinesis. The chain is SH3 domain-containing protein 2 from Arabidopsis thaliana (Mouse-ear cress).